The chain runs to 270 residues: Sulfur carrier protein FdhD (270 aa).

The Cysteine persulfide intermediate role is filled by cysteine 116. Residue 253 to 258 coordinates Mo-bis(molybdopterin guanine dinucleotide); it reads FAREGK.

It belongs to the FdhD family.

It is found in the cytoplasm. Functionally, required for formate dehydrogenase (FDH) activity. Acts as a sulfur carrier protein that transfers sulfur from IscS to the molybdenum cofactor prior to its insertion into FDH. The polypeptide is Sulfur carrier protein FdhD (Haemophilus influenzae (strain ATCC 51907 / DSM 11121 / KW20 / Rd)).